Reading from the N-terminus, the 79-residue chain is Peptide Im-5 (79 aa).

Positions 1-23 (MKYRKQLLVLFFAYFLVVNESEA) are cleaved as a signal peptide. Residues 49–79 (RALMKRDLQDRMDPYQRNLKLDRYLKQLALD) constitute a propeptide that is removed on maturation.

It belongs to the non-disulfide-bridged peptide (NDBP) superfamily. Medium-length antimicrobial peptide (group 3) family. Expressed by the venom gland.

Its subcellular location is the secreted. It is found in the target cell membrane. In terms of biological role, antimicrobial peptide that may act by disrupting the integrity of the bacterial cell membrane. Has antibacterial activity against Gram-negative bacterium E.coli NBRC 3972 (MIC=10 uM) and against Gram-positive bacteria S.aureus NBRC 13276 (MIC=2.5-5 uM) and B.subtilis NBRC 3009 (MIC=0.5-1 uM). Also shows potent activity against antibiotic-sensitive and -resistant Acinetobacter baumannii (MIC=1.8-3.6 uM). Shows cytolytic activity against human and sheep erythrocytes. Toxic to cricket A.domestica. This Isometrus maculatus (Lesser brown scorpion) protein is Peptide Im-5.